A 216-amino-acid chain; its full sequence is 3-keto-L-gulonate-6-phosphate decarboxylase UlaD (216 aa).

Substrate is bound at residue aspartate 11. Glutamate 33 and aspartate 62 together coordinate Mg(2+). Residue arginine 192 participates in substrate binding.

The protein belongs to the HPS/KGPDC family. KGPDC subfamily. In terms of assembly, homodimer. Mg(2+) serves as cofactor.

The catalysed reaction is 3-dehydro-L-gulonate 6-phosphate + H(+) = L-xylulose 5-phosphate + CO2. Its pathway is cofactor degradation; L-ascorbate degradation; D-xylulose 5-phosphate from L-ascorbate: step 2/4. Functionally, catalyzes the decarboxylation of 3-keto-L-gulonate-6-P into L-xylulose-5-P. Is involved in the anaerobic L-ascorbate utilization. The chain is 3-keto-L-gulonate-6-phosphate decarboxylase UlaD from Escherichia coli O17:K52:H18 (strain UMN026 / ExPEC).